Reading from the N-terminus, the 148-residue chain is 3-dehydroquinate dehydratase (148 aa).

Tyr22 (proton acceptor) is an active-site residue. Residues Asn73, His79, and Asp86 each contribute to the substrate site. His99 serves as the catalytic Proton donor. Substrate contacts are provided by residues 100-101 and Arg110; that span reads LS.

It belongs to the type-II 3-dehydroquinase family. Homododecamer.

The catalysed reaction is 3-dehydroquinate = 3-dehydroshikimate + H2O. It functions in the pathway metabolic intermediate biosynthesis; chorismate biosynthesis; chorismate from D-erythrose 4-phosphate and phosphoenolpyruvate: step 3/7. Functionally, catalyzes a trans-dehydration via an enolate intermediate. In Jannaschia sp. (strain CCS1), this protein is 3-dehydroquinate dehydratase.